Here is a 137-residue protein sequence, read N- to C-terminus: Large ribosomal subunit protein uL16 (137 aa).

Basic residues predominate over residues 1 to 19; the sequence is MLSPKKVKFRKQQRGRRTG. A disordered region spans residues 1–20; sequence MLSPKKVKFRKQQRGRRTGT.

The protein belongs to the universal ribosomal protein uL16 family. As to quaternary structure, part of the 50S ribosomal subunit.

Binds 23S rRNA and is also seen to make contacts with the A and possibly P site tRNAs. This is Large ribosomal subunit protein uL16 from Desulfosudis oleivorans (strain DSM 6200 / JCM 39069 / Hxd3) (Desulfococcus oleovorans).